The sequence spans 257 residues: ABC transporter ATP-binding protein YxdL (257 aa).

The 239-residue stretch at 5–243 (LEVKHINKTY…FYEQILDVLS (239 aa)) folds into the ABC transporter domain. 40 to 47 (GPSGSGKT) serves as a coordination point for ATP.

Belongs to the ABC transporter superfamily. In terms of assembly, the complex is composed of two ATP-binding proteins (YxdL) and two transmembrane proteins (YxdM).

In terms of biological role, part of the ABC transporter complex YxdLM which could be involved in peptide resistance. Responsible for energy coupling to the transport system. This chain is ABC transporter ATP-binding protein YxdL (yxdL), found in Bacillus subtilis (strain 168).